A 337-amino-acid polypeptide reads, in one-letter code: Transaldolase (337 aa).

A Nuclear localization signal motif is present at residues 1–10; it reads MSSSPVKRQR. Residue Lys-115 is modified to N6-acetyllysine. The active-site Schiff-base intermediate with substrate is the Lys-142. An N6-acetyllysine modification is found at Lys-219. Phosphoserine occurs at positions 237 and 256. Residues Lys-269, Lys-286, and Lys-321 each carry the N6-acetyllysine modification.

Belongs to the transaldolase family. Type 1 subfamily. In terms of assembly, homodimer. Heterodimer with isoform 2. Interacts with KPNA1 and KPNA4.

The protein resides in the nucleus. It localises to the cytoplasm. It carries out the reaction D-sedoheptulose 7-phosphate + D-glyceraldehyde 3-phosphate = D-erythrose 4-phosphate + beta-D-fructose 6-phosphate. Its pathway is carbohydrate degradation; pentose phosphate pathway; D-glyceraldehyde 3-phosphate and beta-D-fructose 6-phosphate from D-ribose 5-phosphate and D-xylulose 5-phosphate (non-oxidative stage): step 2/3. Functionally, catalyzes the rate-limiting step of the non-oxidative phase in the pentose phosphate pathway. Catalyzes the reversible conversion of sedheptulose-7-phosphate and D-glyceraldehyde 3-phosphate into erythrose-4-phosphate and beta-D-fructose 6-phosphate. Not only acts as a pentose phosphate pathway enzyme, but also affects other metabolite pathways by altering its subcellular localization between the nucleus and the cytoplasm. The chain is Transaldolase from Homo sapiens (Human).